The chain runs to 713 residues: Phospholipase A1 PLIP2, chloroplastic (713 aa).

A chloroplast-targeting transit peptide spans 1-32; that stretch reads MDSLCLNSGLHGVIPAITAVGNGGCGGVVEVR. 2 disordered regions span residues 118–140 and 232–261; these read WKHEEEEDDDEVEDEDGDEDEEV and ALKAENGEVSGETKPIVEAEEEVEEEEKNK. Residues 122–140 show a composition bias toward acidic residues; sequence EEEDDDEVEDEDGDEDEEV. The short motif at 426–430 is the GXSXG element; that stretch reads GHSLG. The active-site Acyl-ester intermediate is the S428. Residues D489 and H608 each act as charge relay system in the active site.

The protein belongs to the AB hydrolase superfamily. Lipase family.

The protein localises to the plastid. The protein resides in the chloroplast membrane. It is found in the chloroplast stroma. The catalysed reaction is a 1,2-diacyl-3-O-(beta-D-galactosyl)-sn-glycerol + 2 H2O = 3-beta-D-galactosyl-sn-glycerol + 2 a fatty acid + 2 H(+). It catalyses the reaction a 1,2-diacyl-sn-glycero-3-phosphocholine + H2O = a 2-acyl-sn-glycero-3-phosphocholine + a fatty acid + H(+). It carries out the reaction 1-hexadecanoyl-2-(9Z-octadecenoyl)-sn-glycero-3-phosphocholine + H2O = 2-(9Z-octadecenoyl)-sn-glycero-3-phosphocholine + hexadecanoate + H(+). The enzyme catalyses 1,2-di-(9Z-octadecenoyl)-sn-glycero-3-phosphocholine + H2O = 2-(9Z-octadecenoyl)-sn-glycero-3-phosphocholine + (9Z)-octadecenoate + H(+). The catalysed reaction is 1-octadecanoyl-2-(9Z-octadecenoyl)-sn-glycero-3-phosphocholine + H2O = 2-(9Z-octadecenoyl)-sn-glycero-3-phosphocholine + octadecanoate + H(+). It catalyses the reaction 1-octadecanoyl-2-(9Z,12Z)-octadecadienoyl-sn-glycero-3-phosphocholine + H2O = 2-(9Z,12Z-octadecadienoyl)-sn-glycero-3-phosphocholine + octadecanoate + H(+). It carries out the reaction 1,2-di-(9Z,12Z-octadecadienoyl)-sn-glycero-3-phosphocholine + H2O = 2-(9Z,12Z-octadecadienoyl)-sn-glycero-3-phosphocholine + (9Z,12Z)-octadecadienoate + H(+). The enzyme catalyses 1-(9Z-octadecenoyl)-2-hexadecanoyl-sn-glycero-3-phosphocholine + H2O = 2-hexadecanoyl-sn-glycero-3-phosphocholine + (9Z)-octadecenoate + H(+). Functionally, sn-1-specific phospholipase A1 that catalyzes the initial step of oxylipins and jasmonate (JA) biosynthesis. Hydrolyzes polyunsaturated acyl groups preferentially from chloroplastic monogalactosyldiacylglycerol (MGDG). May function downstream of abscisic acid (ABA) and provide a link between ABA-mediated abiotic stress responses and oxylipin and JA signalings. In vitro, possesses broad substrate specificity. Can hydrolyze the galactolipids monogalactosyldiacylglycerol (MGDG) and digalactosyldiacylglycerol (DGDG), the sulfolipid sulfoquinovosyldiacylglycerol (SQDG), and the phoshpolipids phosphatidylcholine (PC), and phosphatidylglycerol (PG). The chain is Phospholipase A1 PLIP2, chloroplastic from Arabidopsis thaliana (Mouse-ear cress).